Here is a 338-residue protein sequence, read N- to C-terminus: UDP-glucose 4-epimerase (338 aa).

NAD(+)-binding positions include 11–12 (YI), 31–36 (DNLCNS), 58–59 (DI), 80–84 (FAGLK), asparagine 99, serine 124, tyrosine 149, lysine 153, and phenylalanine 178. Substrate is bound by residues serine 124 and tyrosine 149. Tyrosine 149 (proton acceptor) is an active-site residue. Residues asparagine 179, 199–200 (NL), 216–218 (AVF), arginine 231, 292–295 (RDGD), and tyrosine 299 each bind substrate.

It belongs to the NAD(P)-dependent epimerase/dehydratase family. As to quaternary structure, homodimer. It depends on NAD(+) as a cofactor.

It catalyses the reaction UDP-alpha-D-glucose = UDP-alpha-D-galactose. Its pathway is carbohydrate metabolism; galactose metabolism. In terms of biological role, involved in the metabolism of galactose. Catalyzes the conversion of UDP-galactose (UDP-Gal) to UDP-glucose (UDP-Glc) through a mechanism involving the transient reduction of NAD. The polypeptide is UDP-glucose 4-epimerase (galE) (Salmonella typhi).